A 463-amino-acid chain; its full sequence is MAASMFYGRQLAAAALRSHRPQTTLRAAAQVLGNSGLFNKHGLQVQQQQQRTLSLHEYLSMELLQEAGVSVPKGFVAKSSDEAYAIAKKLGSKDVVIKAQVLAGGRGKGTFTSGLKGGVKIVFSPEEAKAVSSQMIGQKLITKQTGEKGRICNQVLVCERKYPRREYYFAITMERSFQGPVLIGSAQGGVNIEDVAAENPEAIVKEPIDIVEGIKKEQAVTLAQKMGFPSNIVDSAAENMIKLYNLFLKYDATMVEINPMVEDSDGKVLCMDAKINFDSNSAYRQKKIFDLQDWSQEDERDKEAANADINYIGLDGSIGCLVNGAGLAMATMDIIKLHGGTPANFLDVGGGATVQQVTEAFKLITSDKKVQAILVNIFGGIMRCDVIAQGIVMAVKDLEIRIPVVVRLQGTRVDDAKALIADSGLKILACDDLDEAAKMVVKLSEIVTLAKEAHVDVKFQLPI.

The transit peptide at 1–53 (MAASMFYGRQLAAAALRSHRPQTTLRAAAQVLGNSGLFNKHGLQVQQQQQRTL) directs the protein to the mitochondrion. The region spanning 61 to 288 (MELLQEAGVS…SNSAYRQKKI (228 aa)) is the ATP-grasp domain. Lysine 78 carries the post-translational modification N6-acetyllysine. Phosphotyrosine is present on tyrosine 84. An N6-acetyllysine; alternate modification is found at lysine 88. Position 88 is an N6-succinyllysine; alternate (lysine 88). ATP contacts are provided by residues lysine 98 and 105–107 (GRG). Lysine 129, lysine 139, lysine 143, and lysine 216 each carry N6-acetyllysine. Mg(2+)-binding residues include asparagine 258 and aspartate 272. Serine 279 carries the post-translational modification Phosphoserine. Asparagine 323 serves as a coordination point for substrate. Position 341 is a phosphothreonine (threonine 341). At lysine 368 the chain carries N6-acetyllysine. 380 to 382 (GIM) contributes to the substrate binding site. Residue lysine 438 is modified to N6-acetyllysine.

It belongs to the succinate/malate CoA ligase beta subunit family. ATP-specific subunit beta subfamily. In terms of assembly, heterodimer of an alpha and a beta subunit. The beta subunit determines specificity for ATP. Interacts with ALAS2. Mg(2+) serves as cofactor.

It localises to the mitochondrion. It catalyses the reaction succinate + ATP + CoA = succinyl-CoA + ADP + phosphate. The protein operates within carbohydrate metabolism; tricarboxylic acid cycle; succinate from succinyl-CoA (ligase route): step 1/1. In terms of biological role, ATP-specific succinyl-CoA synthetase functions in the citric acid cycle (TCA), coupling the hydrolysis of succinyl-CoA to the synthesis of ATP and thus represents the only step of substrate-level phosphorylation in the TCA. The beta subunit provides nucleotide specificity of the enzyme and binds the substrate succinate, while the binding sites for coenzyme A and phosphate are found in the alpha subunit. The sequence is that of Succinate--CoA ligase [ADP-forming] subunit beta, mitochondrial from Mus musculus (Mouse).